The chain runs to 250 residues: Small ribosomal subunit protein uS2 (250 aa).

The protein belongs to the universal ribosomal protein uS2 family.

The polypeptide is Small ribosomal subunit protein uS2 (Polaromonas sp. (strain JS666 / ATCC BAA-500)).